Here is a 556-residue protein sequence, read N- to C-terminus: Formate--tetrahydrofolate ligase 1 (556 aa).

65–72 (TPAGEGKS) contributes to the ATP binding site.

This sequence belongs to the formate--tetrahydrofolate ligase family.

It carries out the reaction (6S)-5,6,7,8-tetrahydrofolate + formate + ATP = (6R)-10-formyltetrahydrofolate + ADP + phosphate. The protein operates within one-carbon metabolism; tetrahydrofolate interconversion. This Streptococcus pyogenes serotype M2 (strain MGAS10270) protein is Formate--tetrahydrofolate ligase 1.